A 543-amino-acid chain; its full sequence is Cytochrome P450 monooxygenase sphH (543 aa).

2 consecutive transmembrane segments (helical) span residues 1 to 21 (MGPIHNYFGVVCLGIAASVYF) and 32 to 52 (IATFAVLLTGIAISKLLYQLF). C487 contributes to the heme binding site.

This sequence belongs to the cytochrome P450 family. Heme serves as cofactor.

It is found in the membrane. The catalysed reaction is presphingofungin + 2 reduced [NADPH--hemoprotein reductase] + O2 = sphingofungin B1 + 2 oxidized [NADPH--hemoprotein reductase] + H2O + 2 H(+). The protein operates within secondary metabolite biosynthesis. Its function is as follows. Cytochrome P450 monooxygenase; part of the gene cluster that mediates the biosynthesis of sphingofungins, bioactive molecules acting as sphingolipid inhibitors via inhibiting serine palmitoyl transferase (SPT). Within the pathway, sphH catalyzes the conversion of presphingofungin into sphingofungin B1 via hydroxylagtion at position C-14. Sphingofungin biosynthesis starts with the PKS sphB that produces an C18 polyketide precursor 3-hydroxyoctadeca-4,10-dienoyl-ACP containing one delta-6 desaturation and one delta-12 desaturation. The aminoacyl transferase sphA uses the sphB product to produce 3-keto-presphingofungin by adding an aminomalonate molecule. SphF then reduces the C-3 ketone of 3-keto-presphingofungin which leads to presphingofungin. The cytochrome P450 monooxygenase sphH converts presphingofungin into sphingofungin B1 which is further converted to sphingofungin B by the dioxygenase sphC. SphC is also able to convert presphingofungin into sphingofungin B2. The acetyltransferase sphE acetylates sphingofungin B to produce sphingofungin C, but can also convert sphingofungin B1 into sphingofungin C1 and sphingofungin B2 into sphingofungin C2. Finally, sphingofungin C can be spontaneously converted into sphingofungin D. The sequence is that of Cytochrome P450 monooxygenase sphH from Aspergillus fumigatus (strain CBS 144.89 / FGSC A1163 / CEA10) (Neosartorya fumigata).